The primary structure comprises 161 residues: Endoribonuclease YbeY (161 aa).

Zn(2+)-binding residues include His120, His124, and His130.

This sequence belongs to the endoribonuclease YbeY family. Zn(2+) serves as cofactor.

The protein resides in the cytoplasm. Single strand-specific metallo-endoribonuclease involved in late-stage 70S ribosome quality control and in maturation of the 3' terminus of the 16S rRNA. In Erythrobacter litoralis (strain HTCC2594), this protein is Endoribonuclease YbeY.